We begin with the raw amino-acid sequence, 205 residues long: Holliday junction branch migration complex subunit RuvA (205 aa).

The interval 1 to 64 is domain I; that stretch reads MIGKLRGLID…EDQIKLFGFR (64 aa). Positions 65–143 are domain II; it reads SDVEREWFRL…AFANVDPGVV (79 aa). Residues 144–154 are flexible linker; that stretch reads RLSGAIEESRA. The segment at 154–205 is domain III; it reads APQPVADAISALINLGYGQPQAAAAIAAASRAAGDKAETAQLIRLGLKELAK.

It belongs to the RuvA family. Homotetramer. Forms an RuvA(8)-RuvB(12)-Holliday junction (HJ) complex. HJ DNA is sandwiched between 2 RuvA tetramers; dsDNA enters through RuvA and exits via RuvB. An RuvB hexamer assembles on each DNA strand where it exits the tetramer. Each RuvB hexamer is contacted by two RuvA subunits (via domain III) on 2 adjacent RuvB subunits; this complex drives branch migration. In the full resolvosome a probable DNA-RuvA(4)-RuvB(12)-RuvC(2) complex forms which resolves the HJ.

The protein resides in the cytoplasm. Its function is as follows. The RuvA-RuvB-RuvC complex processes Holliday junction (HJ) DNA during genetic recombination and DNA repair, while the RuvA-RuvB complex plays an important role in the rescue of blocked DNA replication forks via replication fork reversal (RFR). RuvA specifically binds to HJ cruciform DNA, conferring on it an open structure. The RuvB hexamer acts as an ATP-dependent pump, pulling dsDNA into and through the RuvAB complex. HJ branch migration allows RuvC to scan DNA until it finds its consensus sequence, where it cleaves and resolves the cruciform DNA. The sequence is that of Holliday junction branch migration complex subunit RuvA from Bradyrhizobium sp. (strain ORS 278).